Consider the following 89-residue polypeptide: Large ribosomal subunit protein bL27 (89 aa).

The interval 1-21 (MAHKKAGGSSRNGRDSKGKRL) is disordered.

Belongs to the bacterial ribosomal protein bL27 family.

The sequence is that of Large ribosomal subunit protein bL27 from Bradyrhizobium sp. (strain ORS 278).